We begin with the raw amino-acid sequence, 126 residues long: Large ribosomal subunit protein bL12 (126 aa).

Belongs to the bacterial ribosomal protein bL12 family. In terms of assembly, homodimer. Part of the ribosomal stalk of the 50S ribosomal subunit. Forms a multimeric L10(L12)X complex, where L10 forms an elongated spine to which 2 to 4 L12 dimers bind in a sequential fashion. Binds GTP-bound translation factors.

Its function is as follows. Forms part of the ribosomal stalk which helps the ribosome interact with GTP-bound translation factors. Is thus essential for accurate translation. This is Large ribosomal subunit protein bL12 from Corynebacterium diphtheriae (strain ATCC 700971 / NCTC 13129 / Biotype gravis).